Consider the following 229-residue polypeptide: Clathrin light chain B (229 aa).

Residues 1–17 (MADDFGFFSSSESGAPE) are compositionally biased toward low complexity. Residues 1-82 (MADDFGFFSS…NGDVFQEANG (82 aa)) are disordered. Phosphoserine is present on residues Ser11 and Ser13. Over residues 58-73 (GPTSGAGSEDMGTTVN) the composition is skewed to polar residues. The involved in binding clathrin heavy chain stretch occupies residues 93 to 155 (ADRLTQEPES…QVEKNKINNR (63 aa)). Phosphothreonine is present on Thr187. Cys199 and Cys209 are oxidised to a cystine. At Lys204 the chain carries N6-acetyllysine. The residue at position 217 (Ser217) is a Phosphoserine.

It belongs to the clathrin light chain family. As to quaternary structure, clathrin coats are formed from molecules containing 3 heavy chains and 3 light chains. Interacts (via N-terminus) with HIP1. Interacts with HIP1R.

The protein resides in the cytoplasmic vesicle membrane. The protein localises to the membrane. Its subcellular location is the coated pit. Its function is as follows. Clathrin is the major protein of the polyhedral coat of coated pits and vesicles. The polypeptide is Clathrin light chain B (CLTB) (Homo sapiens (Human)).